Consider the following 606-residue polypeptide: Aspartate--tRNA(Asp/Asn) ligase (606 aa).

Position 177 (Glu177) interacts with L-aspartate. An aspartate region spans residues 201–204; the sequence is QLFK. L-aspartate is bound at residue Arg223. Residues 223-225 and Gln232 contribute to the ATP site; that span reads RDE. An L-aspartate-binding site is contributed by His461. ATP is bound at residue Glu499. Residue Arg506 coordinates L-aspartate. 551–554 lines the ATP pocket; that stretch reads GMDR.

Belongs to the class-II aminoacyl-tRNA synthetase family. Type 1 subfamily. As to quaternary structure, homodimer.

The protein localises to the cytoplasm. The catalysed reaction is tRNA(Asx) + L-aspartate + ATP = L-aspartyl-tRNA(Asx) + AMP + diphosphate. Its function is as follows. Aspartyl-tRNA synthetase with relaxed tRNA specificity since it is able to aspartylate not only its cognate tRNA(Asp) but also tRNA(Asn). Reaction proceeds in two steps: L-aspartate is first activated by ATP to form Asp-AMP and then transferred to the acceptor end of tRNA(Asp/Asn). This Prochlorococcus marinus (strain MIT 9303) protein is Aspartate--tRNA(Asp/Asn) ligase.